We begin with the raw amino-acid sequence, 432 residues long: Testis-specific Y-encoded-like protein 1 (432 aa).

3 disordered regions span residues 1 to 31 (MSGR…PDPS), 54 to 110 (ALPP…LETA), and 116 to 135 (TDDS…LSRE). A Glycyl lysine isopeptide (Lys-Gly) (interchain with G-Cter in SUMO2) cross-link involves residue K160.

It belongs to the nucleosome assembly protein (NAP) family. Post-translationally, ubiquitinated by the CRL2(APPBP2) complex, which recognizes the Arg-Xaa-Xaa-Gly sequence at the C-terminus, leading to its degradation.

The protein localises to the nucleus. It localises to the nucleolus. This Bos taurus (Bovine) protein is Testis-specific Y-encoded-like protein 1 (TSPYL1).